Reading from the N-terminus, the 218-residue chain is UPF0301 protein RPB_4502 (218 aa).

The tract at residues 1–26 (MVTKSKRPKSGDRSGREPGNAGPIEQ) is disordered.

It belongs to the UPF0301 (AlgH) family.

The polypeptide is UPF0301 protein RPB_4502 (Rhodopseudomonas palustris (strain HaA2)).